A 259-amino-acid polypeptide reads, in one-letter code: tRNA (guanine-N(1)-)-methyltransferase (259 aa).

S-adenosyl-L-methionine contacts are provided by residues G113 and 133-138 (IGDYVL).

This sequence belongs to the RNA methyltransferase TrmD family. Homodimer.

It is found in the cytoplasm. The enzyme catalyses guanosine(37) in tRNA + S-adenosyl-L-methionine = N(1)-methylguanosine(37) in tRNA + S-adenosyl-L-homocysteine + H(+). Specifically methylates guanosine-37 in various tRNAs. The sequence is that of tRNA (guanine-N(1)-)-methyltransferase from Xanthomonas oryzae pv. oryzae (strain MAFF 311018).